The following is a 454-amino-acid chain: tRNA modification GTPase MnmE (454 aa).

(6S)-5-formyl-5,6,7,8-tetrahydrofolate contacts are provided by arginine 23, glutamate 80, and lysine 120. Residues 216–377 form the TrmE-type G domain; sequence GMKVVIAGRP…LREHLKQSMG (162 aa). Asparagine 226 lines the K(+) pocket. GTP-binding positions include 226–231, 245–251, and 270–273; these read NAGKSS, TDIAGTT, and DTAG. Serine 230 provides a ligand contact to Mg(2+). K(+) contacts are provided by threonine 245, isoleucine 247, and threonine 250. A Mg(2+)-binding site is contributed by threonine 251. Lysine 454 lines the (6S)-5-formyl-5,6,7,8-tetrahydrofolate pocket.

It belongs to the TRAFAC class TrmE-Era-EngA-EngB-Septin-like GTPase superfamily. TrmE GTPase family. As to quaternary structure, homodimer. Heterotetramer of two MnmE and two MnmG subunits. Requires K(+) as cofactor.

The protein resides in the cytoplasm. In terms of biological role, exhibits a very high intrinsic GTPase hydrolysis rate. Involved in the addition of a carboxymethylaminomethyl (cmnm) group at the wobble position (U34) of certain tRNAs, forming tRNA-cmnm(5)s(2)U34. This Mannheimia succiniciproducens (strain KCTC 0769BP / MBEL55E) protein is tRNA modification GTPase MnmE.